The following is a 294-amino-acid chain: 4-hydroxy-tetrahydrodipicolinate synthase (294 aa).

Thr47 is a pyruvate binding site. Tyr135 (proton donor/acceptor) is an active-site residue. The active-site Schiff-base intermediate with substrate is the Lys163. Thr205 contacts pyruvate.

This sequence belongs to the DapA family. In terms of assembly, homotetramer; dimer of dimers.

It is found in the cytoplasm. It catalyses the reaction L-aspartate 4-semialdehyde + pyruvate = (2S,4S)-4-hydroxy-2,3,4,5-tetrahydrodipicolinate + H2O + H(+). Its pathway is amino-acid biosynthesis; L-lysine biosynthesis via DAP pathway; (S)-tetrahydrodipicolinate from L-aspartate: step 3/4. Functionally, catalyzes the condensation of (S)-aspartate-beta-semialdehyde [(S)-ASA] and pyruvate to 4-hydroxy-tetrahydrodipicolinate (HTPA). The chain is 4-hydroxy-tetrahydrodipicolinate synthase from Rickettsia rickettsii.